A 411-amino-acid chain; its full sequence is Dipeptidase 1 (411 aa).

The first 16 residues, 1–16 (MWSGWWLWPLVAVCTA), serve as a signal peptide directing secretion. His-36 and Asp-38 together coordinate Zn(2+). Residue Asn-57 is glycosylated (N-linked (GlcNAc...) asparagine). An intrachain disulfide couples Cys-87 to Cys-170. Zn(2+) is bound at residue Glu-141. Residue His-168 coordinates substrate. The Zn(2+) site is built by His-214 and His-235. A disulfide bridge connects residues Cys-242 and Cys-274. Residue Arg-246 participates in substrate binding. Asn-279 carries an N-linked (GlcNAc...) asparagine glycan. Asp-304 is a binding site for substrate. Asn-332 and Asn-358 each carry an N-linked (GlcNAc...) asparagine glycan. Ser-385 is lipidated: GPI-anchor amidated serine. Residues 386–411 (GASSLHRHWGLLLASLAPLVLCLSLL) constitute a propeptide, removed in mature form.

It belongs to the metallo-dependent hydrolases superfamily. Peptidase M19 family. As to quaternary structure, homodimer; disulfide-linked. Zn(2+) is required as a cofactor. Expressed in lung and kidneys.

Its subcellular location is the apical cell membrane. It is found in the cell projection. The protein resides in the microvillus membrane. It catalyses the reaction an L-aminoacyl-L-amino acid + H2O = 2 an L-alpha-amino acid. The enzyme catalyses leukotriene D4 + H2O = leukotriene E4 + glycine. The catalysed reaction is a beta-lactam + H2O = a substituted beta-amino acid. It carries out the reaction L-cystine-bis-glycine + 2 H2O = L-cystine + 2 glycine. It catalyses the reaction glycyldehydrophenylalanine + H2O = 2,3-didehydrophenylalanine + glycine. With respect to regulation, inhibited by L-penicillamine. Beta-lactamase activity is inhibited by cilastatin. Functionally, hydrolyzes a wide range of dipeptides including the conversion of leukotriene D4 to leukotriene E4. Hydrolyzes cystinyl-bis-glycine (cys-bis-gly) formed during glutathione degradation. Also possesses beta lactamase activity and can hydrolyze the beta-lactam antibiotic imipenem. Independently of its dipeptidase activity, acts as an adhesion receptor for neutrophil recruitment from bloodstream into inflamed lungs and liver. In Homo sapiens (Human), this protein is Dipeptidase 1 (DPEP1).